Consider the following 149-residue polypeptide: Protegrin-5 (149 aa).

The signal sequence occupies residues 1 to 29 (METQRASLCLGRWSLWLLLLGLVVPSASA). The propeptide occupies 30-130 (QALSYREAVL…DITCNEVQGV (101 aa)). The segment at 61 to 80 (DQPPKADEDPGTPKPVSFTV) is disordered. Disulfide bonds link Cys85/Cys96, Cys107/Cys124, Cys136/Cys145, and Cys138/Cys143. Arg148 is modified (arginine amide).

This sequence belongs to the cathelicidin family.

It localises to the secreted. Functionally, microbicidal activity. This Sus scrofa (Pig) protein is Protegrin-5 (NPG5).